The primary structure comprises 510 residues: Protein phosphatase EYA3 (510 aa).

Disordered regions lie at residues 1-32 (MQEP…SNLS) and 175-233 (YQTE…DASS). The span at 7–16 (QTLSQVNNPD) shows a compositional bias: polar residues. Positions 192-203 (LPSDSSASPPLS) are enriched in low complexity. Ser-199 and Ser-203 each carry phosphoserine. Residue Asp-246 is the Nucleophile of the active site. Residues Asp-246 and Asp-248 each contribute to the Mg(2+) site. Residue Asp-248 is the Proton donor of the active site. A phosphoserine mark is found at Ser-375 and Ser-409. Asp-474 is a Mg(2+) binding site.

Belongs to the HAD-like hydrolase superfamily. EYA family. As to quaternary structure, interacts with SIX1 and DACH1, and probably SIX2, SIX4 and SIX5. Mg(2+) is required as a cofactor. Post-translationally, ser-203 phosphorylation is required for localization at sites of DNA damage and directing interaction with H2AX. In terms of tissue distribution, expressed in branchial arches, CNS and developing eye.

It is found in the cytoplasm. It localises to the nucleus. It catalyses the reaction O-phospho-L-tyrosyl-[protein] + H2O = L-tyrosyl-[protein] + phosphate. Tyrosine phosphatase that specifically dephosphorylates 'Tyr-142' of histone H2AX (H2AXY142ph). 'Tyr-142' phosphorylation of histone H2AX plays a central role in DNA repair and acts as a mark that distinguishes between apoptotic and repair responses to genotoxic stress. Promotes efficient DNA repair by dephosphorylating H2AX, promoting the recruitment of DNA repair complexes containing MDC1. Its function as histone phosphatase probably explains its role in transcription regulation during organogenesis. The phosphatase activity has been shown in vitro. Coactivates SIX1. Seems to coactivate SIX2, SIX4 and SIX5. The repression of precursor cell proliferation in myoblasts by SIX1 is switched to activation through recruitment of EYA3 to the SIX1-DACH1 complex and seems to be dependent on EYA3 phosphatase activity. May be involved in development of the eye. May play a role in mediating the induction and differentiation of cranial placodes. The chain is Protein phosphatase EYA3 (Eya3) from Mus musculus (Mouse).